We begin with the raw amino-acid sequence, 385 residues long: Probable splicing factor YJU2B (385 aa).

Residues 1–26 (MGERKGQNKYYPPDFNPEKHGSLNRY) are disordered. A Phosphoserine modification is found at serine 40. Positions 182 to 214 (LNSMLRRHFREKKKAMQEEEEKDQALQAKASLA) form a coiled coil. The disordered stretch occupies residues 257-385 (PSAQGPSASS…VADYSDSESE (129 aa)). Residues 258–271 (SAQGPSASSSKASS) are compositionally biased toward low complexity. Phosphoserine is present on serine 306. Over residues 359–373 (GSSQEDLLNPNTPNA) the composition is skewed to polar residues.

The protein belongs to the CWC16 family.

The protein resides in the nucleus. In terms of biological role, may be involved in mRNA splicing. This chain is Probable splicing factor YJU2B (Yju2b), found in Mus musculus (Mouse).